Reading from the N-terminus, the 248-residue chain is DNA repair protein RecO (248 aa).

The protein belongs to the RecO family.

Functionally, involved in DNA repair and RecF pathway recombination. This Bradyrhizobium sp. (strain ORS 278) protein is DNA repair protein RecO.